A 590-amino-acid chain; its full sequence is (-)-alpha-terpineol synthase (590 aa).

Residues aspartate 339, aspartate 343, aspartate 483, threonine 487, and glutamate 491 each contribute to the Mg(2+) site. Positions 339–343 match the DDXXD motif motif; it reads DDVYD.

It belongs to the terpene synthase family. Requires Mg(2+) as cofactor.

It carries out the reaction (2E)-geranyl diphosphate + H2O = (S)-alpha-terpineol + diphosphate. It functions in the pathway secondary metabolite biosynthesis; terpenoid biosynthesis. Functionally, mediates the conversion of geranyl diphosphate into alpha-terpineol, a monoterpenol. Monoterpenols contribute to the final grape and wine aroma and flavor. Also forms some 1,8-cineole and traces of other monoterpenoids. The chain is (-)-alpha-terpineol synthase from Vitis vinifera (Grape).